The primary structure comprises 365 residues: 2-aminoethylphosphonate--pyruvate transaminase (365 aa).

At Lys194 the chain carries N6-(pyridoxal phosphate)lysine.

This sequence belongs to the class-V pyridoxal-phosphate-dependent aminotransferase family. PhnW subfamily. In terms of assembly, homodimer. It depends on pyridoxal 5'-phosphate as a cofactor.

It carries out the reaction (2-aminoethyl)phosphonate + pyruvate = phosphonoacetaldehyde + L-alanine. Its function is as follows. Involved in phosphonate degradation. This Bacillus cytotoxicus (strain DSM 22905 / CIP 110041 / 391-98 / NVH 391-98) protein is 2-aminoethylphosphonate--pyruvate transaminase.